Consider the following 876-residue polypeptide: Alanine--tRNA ligase (876 aa).

Lys-74 is modified (N6-acetyllysine). Residues His-564, His-568, Cys-666, and His-670 each coordinate Zn(2+).

Belongs to the class-II aminoacyl-tRNA synthetase family. In terms of assembly, homotetramer. Zn(2+) is required as a cofactor.

Its subcellular location is the cytoplasm. The enzyme catalyses tRNA(Ala) + L-alanine + ATP = L-alanyl-tRNA(Ala) + AMP + diphosphate. In terms of biological role, catalyzes the attachment of alanine to tRNA(Ala) in a two-step reaction: alanine is first activated by ATP to form Ala-AMP and then transferred to the acceptor end of tRNA(Ala). Also edits incorrectly charged Ser-tRNA(Ala) and Gly-tRNA(Ala) via its editing domain. The polypeptide is Alanine--tRNA ligase (Shigella flexneri serotype 5b (strain 8401)).